The primary structure comprises 131 residues: Transcription antitermination protein NusB (131 aa).

This sequence belongs to the NusB family.

Functionally, involved in transcription antitermination. Required for transcription of ribosomal RNA (rRNA) genes. Binds specifically to the boxA antiterminator sequence of the ribosomal RNA (rrn) operons. The protein is Transcription antitermination protein NusB of Campylobacter curvus (strain 525.92).